A 361-amino-acid polypeptide reads, in one-letter code: Ribosomal RNA large subunit methyltransferase M (361 aa).

Residues Ser-187, 220 to 223 (CPGG), Asp-239, Asp-259, and Asp-276 each bind S-adenosyl-L-methionine. The active-site Proton acceptor is Lys-305.

It belongs to the class I-like SAM-binding methyltransferase superfamily. RNA methyltransferase RlmE family. RlmM subfamily. Monomer.

The protein localises to the cytoplasm. The catalysed reaction is cytidine(2498) in 23S rRNA + S-adenosyl-L-methionine = 2'-O-methylcytidine(2498) in 23S rRNA + S-adenosyl-L-homocysteine + H(+). Its function is as follows. Catalyzes the 2'-O-methylation at nucleotide C2498 in 23S rRNA. The polypeptide is Ribosomal RNA large subunit methyltransferase M (Shewanella baltica (strain OS223)).